We begin with the raw amino-acid sequence, 133 residues long: IgW chain C region, secreted form 2 (133 aa).

Residues 1–71 enclose the Ig-like domain; sequence VISGFYPDSV…TGSRFNDRIS (71 aa). 2 N-linked (GlcNAc...) asparagine glycosylation sites follow: Asn32 and Asn112. Residues 76 to 133 are secretory tail; sequence KGGTVNLPVPGGNTPCTCPPSSCSGCMPKLVYQTDLNVTLENGGQLQYNCHQQACKIK.

In terms of tissue distribution, expressed mainly in lymphoid tissues including spleen, epigonal organ and circulating lymphocytes.

The protein localises to the secreted. The protein is IgW chain C region, secreted form 2 of Heterodontus francisci (Horn shark).